Consider the following 524-residue polypeptide: Phosphoenolpyruvate carboxykinase (ATP) (524 aa).

Residues arginine 52, tyrosine 188, and lysine 194 each coordinate substrate. Residues lysine 194, histidine 213, and 229–237 contribute to the ATP site; that span reads GLSGTGKTT. Positions 194 and 213 each coordinate Mn(2+). Residue aspartate 250 coordinates Mn(2+). 3 residues coordinate ATP: glutamate 278, arginine 314, and threonine 439. Arginine 314 contacts substrate.

Belongs to the phosphoenolpyruvate carboxykinase (ATP) family. It depends on Mn(2+) as a cofactor.

The protein localises to the cytoplasm. It catalyses the reaction oxaloacetate + ATP = phosphoenolpyruvate + ADP + CO2. It functions in the pathway carbohydrate biosynthesis; gluconeogenesis. Functionally, involved in the gluconeogenesis. Catalyzes the conversion of oxaloacetate (OAA) to phosphoenolpyruvate (PEP) through direct phosphoryl transfer between the nucleoside triphosphate and OAA. This is Phosphoenolpyruvate carboxykinase (ATP) from Campylobacter jejuni (strain RM1221).